We begin with the raw amino-acid sequence, 209 residues long: ATP phosphoribosyltransferase (209 aa).

It belongs to the ATP phosphoribosyltransferase family. Short subfamily. As to quaternary structure, heteromultimer composed of HisG and HisZ subunits.

The protein localises to the cytoplasm. It carries out the reaction 1-(5-phospho-beta-D-ribosyl)-ATP + diphosphate = 5-phospho-alpha-D-ribose 1-diphosphate + ATP. Its pathway is amino-acid biosynthesis; L-histidine biosynthesis; L-histidine from 5-phospho-alpha-D-ribose 1-diphosphate: step 1/9. In terms of biological role, catalyzes the condensation of ATP and 5-phosphoribose 1-diphosphate to form N'-(5'-phosphoribosyl)-ATP (PR-ATP). Has a crucial role in the pathway because the rate of histidine biosynthesis seems to be controlled primarily by regulation of HisG enzymatic activity. The polypeptide is ATP phosphoribosyltransferase (Caldicellulosiruptor saccharolyticus (strain ATCC 43494 / DSM 8903 / Tp8T 6331)).